Consider the following 2295-residue polypeptide: Protein DOP1B (2295 aa).

Residues Ser-556 and Ser-597 each carry the phosphoserine modification. Disordered stretches follow at residues 574 to 599 (AGDE…SSPE), 651 to 684 (GEEN…DPKP), 1034 to 1059 (CKEA…QFTT), and 1092 to 1136 (DLPD…LQDL). Polar residues predominate over residues 1111–1131 (ADTSSGHTDSENTSTFSSPSH). Ser-1167 carries the post-translational modification Phosphoserine.

It belongs to the DOP1 family. As to quaternary structure, homooligomer. Heterotrimer with ATP9A and MON2; this interaction is retromer-independent. Interacts with SNX3. In terms of tissue distribution, expressed in liver, heart and brain.

The protein localises to the early endosome membrane. It localises to the golgi apparatus membrane. Its function is as follows. May play a role in regulating membrane trafficking of cargo proteins. Together with ATP9A and MON2, regulates SNX3 retromer-mediated endosomal sorting of WLS away from lysosomal degradation. This chain is Protein DOP1B (Dop1b), found in Mus musculus (Mouse).